Consider the following 269-residue polypeptide: 3-methyl-2-oxobutanoate hydroxymethyltransferase (269 aa).

Mg(2+) contacts are provided by Asp50 and Asp89. 3-methyl-2-oxobutanoate is bound by residues 50 to 51 (DS), Asp89, and Lys118. Glu120 contacts Mg(2+). Glu187 acts as the Proton acceptor in catalysis.

It belongs to the PanB family. In terms of assembly, homodecamer; pentamer of dimers. The cofactor is Mg(2+).

It localises to the cytoplasm. The enzyme catalyses 3-methyl-2-oxobutanoate + (6R)-5,10-methylene-5,6,7,8-tetrahydrofolate + H2O = 2-dehydropantoate + (6S)-5,6,7,8-tetrahydrofolate. Its pathway is cofactor biosynthesis; (R)-pantothenate biosynthesis; (R)-pantoate from 3-methyl-2-oxobutanoate: step 1/2. In terms of biological role, catalyzes the reversible reaction in which hydroxymethyl group from 5,10-methylenetetrahydrofolate is transferred onto alpha-ketoisovalerate to form ketopantoate. The polypeptide is 3-methyl-2-oxobutanoate hydroxymethyltransferase (Aliarcobacter butzleri (strain RM4018) (Arcobacter butzleri)).